The chain runs to 400 residues: tRNA-specific adenosine deaminase 1 (400 aa).

One can recognise an A to I editase domain in the interval 76–400; it reads SIATGVKALP…WIPTRTDDVK (325 aa). Histidine 101 contacts Zn(2+). Glutamate 103 (proton donor) is an active-site residue. Residue arginine 108 coordinates 1D-myo-inositol hexakisphosphate. Zn(2+)-binding residues include cysteine 157 and cysteine 223. Residues lysine 226, arginine 232, lysine 369, and arginine 375 each coordinate 1D-myo-inositol hexakisphosphate.

It belongs to the ADAT1 family. 1D-myo-inositol hexakisphosphate serves as cofactor. Zn(2+) is required as a cofactor.

It catalyses the reaction adenosine(37) in tRNA(Ala) + H2O + H(+) = inosine(37) in tRNA(Ala) + NH4(+). In terms of biological role, deaminates adenosine-37 to inosine in tRNA-Ala. The chain is tRNA-specific adenosine deaminase 1 (TAD1) from Saccharomyces cerevisiae (strain ATCC 204508 / S288c) (Baker's yeast).